Here is a 212-residue protein sequence, read N- to C-terminus: Noggin-2 (212 aa).

The N-terminal stretch at 1–23 (MGSITRALPLLLLLLLCAHGTAS) is a signal peptide. Positions 37–56 (LPVPDLIENPDPEHDPREQD) are disordered. Residues 47-56 (DPEHDPREQD) show a composition bias toward basic and acidic residues. N-linked (GlcNAc...) asparagine glycosylation occurs at Asn-84.

It belongs to the noggin family. In terms of assembly, homodimer; disulfide-linked.

Its subcellular location is the secreted. In terms of biological role, inhibitor of bone morphogenetic proteins (BMP) signaling. This chain is Noggin-2 (nog2), found in Danio rerio (Zebrafish).